The sequence spans 439 residues: F-box/FBD/LRR-repeat protein At5g56570 (439 aa).

The 47-residue stretch at 35–81 (PTELSDMPDDLIFKIFSFLPFFKEDLATRFISEYGKGLWNPDPNAIF) folds into the F-box domain. 2 LRR repeats span residues 155–177 (CTTL…WFRL) and 223–246 (VPTL…SFWI). Residues 361–411 (VWEKPTVVPECLSTRLEILKWRDYEGTEHEKDMVGYILANATFLQRATFST) form the FBD domain.

The protein is F-box/FBD/LRR-repeat protein At5g56570 of Arabidopsis thaliana (Mouse-ear cress).